Here is a 75-residue protein sequence, read N- to C-terminus: Small ribosomal subunit protein bS18 (75 aa).

This sequence belongs to the bacterial ribosomal protein bS18 family. As to quaternary structure, part of the 30S ribosomal subunit. Forms a tight heterodimer with protein bS6.

Binds as a heterodimer with protein bS6 to the central domain of the 16S rRNA, where it helps stabilize the platform of the 30S subunit. This is Small ribosomal subunit protein bS18 from Thermosipho melanesiensis (strain DSM 12029 / CIP 104789 / BI429).